Reading from the N-terminus, the 513-residue chain is t-SNARE domain-containing protein 1 (513 aa).

2 disordered regions span residues M1 to R23 and E49 to F128. Residues A7 to G19 are compositionally biased toward gly residues. S378 carries the post-translational modification Phosphoserine. In terms of domain architecture, t-SNARE coiled-coil homology spans L416 to A478. A helical membrane pass occupies residues C491–V511.

The protein localises to the membrane. This Homo sapiens (Human) protein is t-SNARE domain-containing protein 1 (TSNARE1).